The primary structure comprises 278 residues: Small ribosomal subunit protein uS2 (278 aa).

Residues 233–258 are disordered; sequence IDMEAAGEAPANKGKKKSAKARLDKS.

Belongs to the universal ribosomal protein uS2 family.

This Bacteroides fragilis (strain ATCC 25285 / DSM 2151 / CCUG 4856 / JCM 11019 / LMG 10263 / NCTC 9343 / Onslow / VPI 2553 / EN-2) protein is Small ribosomal subunit protein uS2.